The primary structure comprises 171 residues: Large ribosomal subunit protein uL10 (171 aa).

The protein belongs to the universal ribosomal protein uL10 family. Part of the ribosomal stalk of the 50S ribosomal subunit. The N-terminus interacts with L11 and the large rRNA to form the base of the stalk. The C-terminus forms an elongated spine to which L12 dimers bind in a sequential fashion forming a multimeric L10(L12)X complex.

In terms of biological role, forms part of the ribosomal stalk, playing a central role in the interaction of the ribosome with GTP-bound translation factors. This chain is Large ribosomal subunit protein uL10, found in Cereibacter sphaeroides (strain ATCC 17023 / DSM 158 / JCM 6121 / CCUG 31486 / LMG 2827 / NBRC 12203 / NCIMB 8253 / ATH 2.4.1.) (Rhodobacter sphaeroides).